Here is a 350-residue protein sequence, read N- to C-terminus: Bifunctional UDP-glucose 4-epimerase and UDP-xylose 4-epimerase 1 (350 aa).

NAD(+)-binding positions include 15–17, 36–40, 67–68, F89, and K93; these read GFI, DNFDN, and DL. S133 is a substrate binding site. Y157 acts as the Proton acceptor in catalysis. Residues K161 and Y185 each contribute to the NAD(+) site.

It belongs to the NAD(P)-dependent epimerase/dehydratase family. Requires NAD(+) as cofactor.

It carries out the reaction UDP-alpha-D-glucose = UDP-alpha-D-galactose. The catalysed reaction is UDP-beta-L-arabinopyranose = UDP-alpha-D-xylose. Its pathway is carbohydrate metabolism; galactose metabolism. It functions in the pathway nucleotide-sugar biosynthesis; UDP-L-arabinose biosynthesis; UDP-L-arabinose from UDP-alpha-D-xylose: step 1/1. The protein operates within cell wall biogenesis; cell wall polysaccharide biosynthesis. Inhibited by Hg(2+). In terms of biological role, catalyzes the interconversion between UDP-glucose and UDP-galactose and the interconversion between UDP-arabinose and UDP-xylose. The chain is Bifunctional UDP-glucose 4-epimerase and UDP-xylose 4-epimerase 1 from Pisum sativum (Garden pea).